The chain runs to 133 residues: Small ribosomal subunit protein uS11 (133 aa).

This sequence belongs to the universal ribosomal protein uS11 family. As to quaternary structure, part of the 30S ribosomal subunit. Interacts with proteins S7 and S18. Binds to IF-3.

In terms of biological role, located on the platform of the 30S subunit, it bridges several disparate RNA helices of the 16S rRNA. Forms part of the Shine-Dalgarno cleft in the 70S ribosome. This Ralstonia nicotianae (strain ATCC BAA-1114 / GMI1000) (Ralstonia solanacearum) protein is Small ribosomal subunit protein uS11.